Consider the following 507-residue polypeptide: Glycosyltransferase family 92 protein C33H5.2 (507 aa).

The helical transmembrane segment at 6–26 (VILVFCASFALFFTFIIFGRY) threads the bilayer. Positions 155–444 (RDVVMCIAPL…LKCYNEKFYD (290 aa)) constitute a GT92 domain.

This sequence belongs to the glycosyltransferase 92 family.

The protein localises to the membrane. The polypeptide is Glycosyltransferase family 92 protein C33H5.2 (Caenorhabditis elegans).